The chain runs to 219 residues: MEEIKVNVELREKAGVKGVLSAIRAEKKVPAVIYGGQKEPISVSITEKDLKAILKAGSNSVVTLSTPAGKETAIIKEVQYHVVKDTPNHVDFQRISLKEKIDVVVPLKLTGESADVKIYGALINQVLREVAIRALPTAIPHEIAVDISALTIHKAIHISDLSLSKDIEVLGDPERAIVHLMVPREEETVAAPADTAVQPESSSTKGKKDEDGALAKDKK.

The tract at residues 188–219 (TVAAPADTAVQPESSSTKGKKDEDGALAKDKK) is disordered. Residues 206–219 (GKKDEDGALAKDKK) are compositionally biased toward basic and acidic residues.

The protein belongs to the bacterial ribosomal protein bL25 family. CTC subfamily. In terms of assembly, part of the 50S ribosomal subunit; part of the 5S rRNA/L5/L18/L25 subcomplex. Contacts the 5S rRNA. Binds to the 5S rRNA independently of L5 and L18.

Its function is as follows. This is one of the proteins that binds to the 5S RNA in the ribosome where it forms part of the central protuberance. The protein is Large ribosomal subunit protein bL25 of Elusimicrobium minutum (strain Pei191).